We begin with the raw amino-acid sequence, 783 residues long: Protein SCARECROW (783 aa).

The segment at 298–387 (QPQSQDAITH…QSPPASENTA (90 aa)) is disordered. Composition is skewed to low complexity over residues 342-353 (PSSLPFVPVPSS) and 372-384 (ESQS…PASE). A coiled-coil region spans residues 387-418 (AAAALIRTESIMRREKEELEQQKKDEEGLHLL). Positions 408-777 (QKKDEEGLHL…LCLLTASAWR (370 aa)) constitute a GRAS domain. The tract at residues 415 to 478 (LHLLTLLLQC…LVNSCLGIYA (64 aa)) is leucine repeat I (LRI). The LxCxE motif signature appears at 422–426 (LQCAE). Residues 497-562 (FQVFNGISPF…GGPPLVRLTG (66 aa)) form a VHIID region. The VHIID motif lies at 528–532 (VHIID). The interval 572-604 (ATGKRLSDFAQKLGLPFEFFPVADKVGNLDPQR) is leucine repeat II (LRII). The segment at 613–700 (VAVHWLQHSL…QQLLSREIRN (88 aa)) is PFYRE. Residues 703 to 777 (AVGGPSRSGE…LCLLTASAWR (75 aa)) are SAW.

Belongs to the GRAS family.

Its subcellular location is the nucleus. In terms of biological role, putative transcription factor involved in asymmetric cell division. Required for differentiation of endodermis and graviresponses. The chain is Protein SCARECROW (SCR) from Ipomoea nil (Japanese morning glory).